The sequence spans 598 residues: MFS transporter L2 (598 aa).

A run of 3 helical transmembrane segments spans residues 83–103 (IAAFLSLCIIVLMAALDATSI), 122–142 (FWAGTSFLLTSTIFQPVLGSF), and 150–170 (SLIYISLVFFLAGSIIPAVAN). An N-linked (GlcNAc...) asparagine glycan is attached at Asn-171. Transmembrane regions (helical) follow at residues 183-203 (GVGGGGIIALTEMVVVDTVPL), 212-232 (FFGMMWSFGTVAGPLIGGAFA), 239-259 (WVFWINLPFLGIGTVLITVFL), 277-297 (WIGMVLFLGSTTGFLIPITWG), and 309-329 (LVPLIVSAAGIVAFIVHQEKF). Asn-342 carries N-linked (GlcNAc...) asparagine glycosylation. Transmembrane regions (helical) follow at residues 346–366 (ALLYLTTVIHGIILWAILYFM), 383–403 (VALFPWTFTVAPGAVATGIAI), 411–431 (WANWAGWFLATLGSGLLILLK), 439–459 (WIFLNLVGGIGTGILFPAMAL), 476–496 (MFSFFRAFGQTLGVAIGGVVF), and 550–570 (YIWIVATVLAGVSLVATLFID).

The protein belongs to the major facilitator superfamily.

It localises to the membrane. Functionally, MFS transporter; part of the gene cluster that mediates the biosynthesis of squalestatin S1 (SQS1, also known as zaragozic acid A), a lead compound for the treatment of hyper-cholesterolemia by targeting squalene synthase (SS). This Phoma sp. (strain ATCC 20986 / MF5453) protein is MFS transporter L2.